The sequence spans 87 residues: UPF0250 protein NE1487 (87 aa).

The protein belongs to the UPF0250 family.

This Nitrosomonas europaea (strain ATCC 19718 / CIP 103999 / KCTC 2705 / NBRC 14298) protein is UPF0250 protein NE1487.